The chain runs to 313 residues: Mitochondrial uncoupling protein 4 (313 aa).

Solcar repeat units follow at residues 4–115 (KSFV…LKNK), 124–215 (LNLS…FKEG), and 224–309 (DGLG…VRKL). The next 6 membrane-spanning stretches (helical) occupy residues 6–26 (FVEG…LDLI), 84–104 (AAAL…YSTT), 130–150 (IGAG…ADVA), 189–209 (RGSA…LASY), 230–250 (VVAS…VDVI), and 282–302 (YKGF…LFVT).

It belongs to the mitochondrial carrier (TC 2.A.29) family. Expressed in roots, leaves, stems and flowers.

Its subcellular location is the mitochondrion inner membrane. In terms of biological role, PUMPS are mitochondrial transporter proteins that create proton leaks across the inner mitochondrial membrane, thus uncoupling oxidative phosphorylation. This leads to a decrease in the efficiency of oxidative phosphorylation and an increase in heat production. May be involved in protecting plant cells against oxidative stress damage. Recombinant PUMP4, reconstituted into liposomes, transports a wide range of dicarboxylic acids including malate, oxaloacetate and succinate as well as phosphate, sulfate and thiosulfate. However, it is unknown if these transports are of any biological significance in vivo. The chain is Mitochondrial uncoupling protein 4 (PUMP4) from Arabidopsis thaliana (Mouse-ear cress).